The sequence spans 292 residues: uncharacterized protein (292 aa).

This is an uncharacterized protein from Acanthamoeba polyphaga (Amoeba).